The chain runs to 1904 residues: Callose synthase 10 (1904 aa).

The stretch at 100 to 132 (VIKQKLAKRDGASIDRDRDIERLWEFYKLYKRR) is one HAT 1 repeat. Transmembrane regions (helical) follow at residues 491–511 (SFIR…IIAF), 532–552 (AIMN…AYSM), 562–582 (VIRF…YVKV), 594–614 (FFFH…LIFG), 661–681 (YVAF…FLQI), and 722–742 (VLAI…AIIG). An LRR 1 repeat occupies 678 to 701 (FLQIKPLVKPTNTIIHLPPFQYSW). LRR repeat units lie at residues 751–774 (LGEI…FAQN) and 925–948 (TLNL…LIRN). Residues 1074–1107 (YSSSELRSENEDGISILFYLQKIFPDEWENFLER) form an HAT 2 repeat. The stretch at 1159–1181 (FLERRGLGVDDASLTNMPRGFES) is one LRR 4 repeat. Helical transmembrane passes span 1474–1494 (FTTV…YVFL), 1529–1549 (FLVQ…ILEL), 1554–1574 (AIFS…TFSL), 1621–1641 (AFEV…DGGA), 1644–1664 (FVLL…APYI), 1747–1767 (LALY…FKLF), 1783–1803 (FLQG…IAMT), 1811–1831 (FACV…AITW), and 1853–1873 (AAMG…PFIS). Residues 1659-1691 (LFAPYIFNPSGFEWQKTVEDFEDWVSWLMYKGG) form an HAT 3 repeat.

It belongs to the glycosyltransferase 48 family.

Its subcellular location is the cell membrane. It carries out the reaction [(1-&gt;3)-beta-D-glucosyl](n) + UDP-alpha-D-glucose = [(1-&gt;3)-beta-D-glucosyl](n+1) + UDP + H(+). In terms of biological role, involved in sporophytic and gametophytic development. Required for normal plant development and for the proper accumulation of callose at cell plates, cll walls and plasmodesmata. During pollen formation, required for the entry of microspores into mitosis. During plant growth and development, callose is found as a transitory component of the cell plate in dividing cells, is a major component of pollen mother cell walls and pollen tubes, and is found as a structural component of plasmodesmatal canals. Required for proper cell division and tissue patterning throughout plant organs, including stomatal patterning. In Arabidopsis thaliana (Mouse-ear cress), this protein is Callose synthase 10 (CALS10).